We begin with the raw amino-acid sequence, 478 residues long: Transcription factor PIF1 (478 aa).

Threonine 10 is modified (phosphothreonine; by CK2). Disordered stretches follow at residues 56–80, 122–144, 172–210, 230–294, and 391–478; these read LHTKKPSSSPPKLLPSMDPQQQPSS, VSQVTAARPPVSSTNESRPPVRN, VRESTQVSPSATPSAAASESGLTRRTDGTDSSAVAGGGA, TSSS…LSER, and TQTH…HTTG. Residues 69 to 80 show a composition bias toward low complexity; it reads LPSMDPQQQPSS. A compositionally biased stretch (low complexity) spans 179–189; sequence SPSATPSAAAS. Phosphothreonine; by CK2 is present on threonine 197. The residue at position 202 (serine 202) is a Phosphoserine; by CK2. 2 stretches are compositionally biased toward basic and acidic residues: residues 238-272 and 284-294; these read SEIEPEKTNVDDRKRKEREATTTDETESRSEETKQ and RAAEVHNLSER. The region spanning 284 to 333 is the bHLH domain; it reads RAAEVHNLSERKRRDRINERMKALQELIPRCNKSDKASMLDEAIEYMKSL. Polar residues predominate over residues 415-426; sequence PNQQYDPTSGQP. A phosphoserine; by CK2 mark is found at serine 464, serine 465, serine 466, and serine 469. Over residues 465 to 478 the composition is skewed to basic and acidic residues; the sequence is SSKESEDHGNHTTG.

Homodimer. Interacts with the photoactivated conformer (Pfr) of phytochromes A and B, PHYA and PHYB. Also interacts with APRR1/TOC1. Binds to RGL2, RGA and FHY3 (via N-terminus). Associates to PTAC12/HMR/PAP5 which acts as a transcriptional coactivator. Binds directly to PCH1 and PCHL; this interaction facilitates its association with phyB and its subsequent light-induced degradation. Post-translationally, phosphorylated at Thr-10, Thr-197, Ser-202, Ser-464, Ser-465, Ser-466 and Ser-469 by CK2. Phosphorylated and ubiquitinated after an exposure to light (especially red and far-red), in a phytochrome-dependent manner. Modified proteins undergo a proteasome-dependent degradation. Its stability and degradation plays a central role in photomorphogenesis of seedlings. As to expression, mainly expressed in leaves, stems and seedlings, and, to a lower extent, in fruits, flowers and roots.

It is found in the nucleus. Its activity is regulated as follows. DNA-binding ability is inhibited by PCH1 and PCHL to negatively regulate the expressions of its target genes. Its function is as follows. Transcription activator. Negatively regulates chlorophyll biosynthesis and seed germination in the dark, and lightinduced degradation of PIF1 relieves this negative regulation to promote photomorphogenesis. Binds to the G-box motif (5'-CACGTG-3') found in many light-regulated promoters. Promotes the expression of SOM, and thus modulates responses to abscisic acid (ABA) and gibberellic acid (GA). In Arabidopsis thaliana (Mouse-ear cress), this protein is Transcription factor PIF1.